The following is a 341-amino-acid chain: L-threonine 3-dehydrogenase (341 aa).

Cys-38 lines the Zn(2+) pocket. Residues Thr-40 and His-43 each act as charge relay system in the active site. Zn(2+) contacts are provided by His-63, Glu-64, Cys-93, Cys-96, Cys-99, and Cys-107. NAD(+)-binding positions include Ile-175, Asp-195, Arg-200, 262 to 264 (LGI), and 286 to 287 (IY).

This sequence belongs to the zinc-containing alcohol dehydrogenase family. In terms of assembly, homotetramer. Requires Zn(2+) as cofactor.

It is found in the cytoplasm. The catalysed reaction is L-threonine + NAD(+) = (2S)-2-amino-3-oxobutanoate + NADH + H(+). It participates in amino-acid degradation; L-threonine degradation via oxydo-reductase pathway; glycine from L-threonine: step 1/2. Catalyzes the NAD(+)-dependent oxidation of L-threonine to 2-amino-3-ketobutyrate. This is L-threonine 3-dehydrogenase from Shewanella sp. (strain W3-18-1).